The primary structure comprises 494 residues: MPFAHEQLNLVASEQLSKTETIKLRNQHIGQACQLFYRSDPLKIVRGQGQYMFDEEGTRYLDCINNVAHVGHCHPEVVRAGALQMATISTNNRFLHDELVQCARTLTSKMPEPLSVCFFVNSGSEANDLALRLARNFTKRQDVITLDHAYHGHLQSVMEVSPYKFNQPGGEAKPDYVHVAPCPDVYGGKFTDKMYPDADMGALYAQPIEEICQKQLAKGQGVAAFIAESLQSCGGQILPPAGYFQAVYDAVRSAGGVCIADEVQVGFGRVGSHYWAFETQNVIPDIVCVAKPMGNGHPVGAVVTTPEIAQAFHATGVAYFNTYGGNPVSCAIANAVMRVIEEEGLQQKALVLGDYLLEECNRLKQEFECIGDVRGAGLFVGIELVQDRKERIPDKKAAHWVVNRMKQLHRVLVSSDGPNDNVIKLKPPMCFNRENADEFLLGFRECLTAVMQERLASATSAAMAATSGVIATATETLANKTKLFERQDRLIKSV.

Lysine 291 carries the N6-(pyridoxal phosphate)lysine modification.

Belongs to the class-III pyridoxal-phosphate-dependent aminotransferase family. It depends on pyridoxal 5'-phosphate as a cofactor.

The sequence is that of Alanine--glyoxylate aminotransferase 2-like from Drosophila melanogaster (Fruit fly).